Here is a 308-residue protein sequence, read N- to C-terminus: MIRERICACVLALGMLTGFTHAFGSKDAAADGKPLVVTTIGMIADAVKNIAQGDVHLKGLMGPGVDPHLYTATAGDVEWLGNADLILYNGLHLETKMGEVFSKLRGSRLVVAVSETIPVSQRLSLEEAEFDPHVWFDVKLWSYSVKAVYESLCKLLPGKTREFTQRYQAYQQQLDKLDAYVRRKAQSLPAERRVLVTAHDAFGYFSRAYGFEVKGLQGVSTASEASAHDMQELAAFIAQRKLPAIFIESSIPHKNVEALRDAVQARGHVVQIGGELFSDAMGDAGTSEGTYVGMVTHNIDTIVAALAR.

The signal sequence occupies residues 1 to 22 (MIRERICACVLALGMLTGFTHA). 4 residues coordinate Zn(2+): histidine 68, histidine 133, histidine 199, and aspartate 279.

The protein belongs to the bacterial solute-binding protein 9 family. In terms of assembly, monomer.

It is found in the periplasm. Part of the ATP-binding cassette (ABC) transport system TroABC involved in zinc import. Binds zinc with high affinity and specificity and delivers it to the membrane permease for translocation into the cytoplasm. This Treponema pallidum (strain Nichols) protein is Zinc-binding protein TroA (troA).